A 626-amino-acid chain; its full sequence is Coilin (626 aa).

Phosphoserine occurs at positions 148 and 162. Disordered stretches follow at residues 253–309 and 382–433; these read LTSQ…ISSN and RGCE…NKKS. Positions 260 to 292 are enriched in low complexity; that stretch reads STPSESDSSSSESSSSVSDSSDLSSTSDSSSGD. Basic and acidic residues predominate over residues 382–395; the sequence is RGCENTEKPSEEGK. A compositionally biased stretch (polar residues) spans 396–417; sequence NFTTPLSDSVESENTWSNTLRS.

Belongs to the coilin family. Interacts with tgs1; both proteins are required to maintain Cajal body integrity. Interacts with U2 and U5 snRNAs.

Its subcellular location is the cytoplasm. The protein localises to the nucleus. The protein resides in the cajal body. Component of nuclear coiled bodies, also known as Cajal bodies or CBs, which are involved in the modification and assembly of nucleoplasmic snRNPs. Required for proper pre-mRNA splicing. This chain is Coilin, found in Schizosaccharomyces pombe (strain 972 / ATCC 24843) (Fission yeast).